A 134-amino-acid polypeptide reads, in one-letter code: Small ribosomal subunit protein uS11 (134 aa).

Belongs to the universal ribosomal protein uS11 family. As to quaternary structure, part of the 30S ribosomal subunit. Interacts with proteins S7 and S18. Binds to IF-3.

In terms of biological role, located on the platform of the 30S subunit, it bridges several disparate RNA helices of the 16S rRNA. Forms part of the Shine-Dalgarno cleft in the 70S ribosome. The protein is Small ribosomal subunit protein uS11 of Corynebacterium glutamicum (strain R).